We begin with the raw amino-acid sequence, 858 residues long: Bifunctional uridylyltransferase/uridylyl-removing enzyme (858 aa).

The interval 1-324 is uridylyltransferase; the sequence is MSASVAEPPP…PATSGVTRVL (324 aa). The uridylyl-removing stretch occupies residues 325–681; the sequence is SPGRFVEKQG…ARPSPVGDAL (357 aa). The HD domain occupies 443-565; it reads VDQHILMVLR…VGSERRLTAL (123 aa). ACT domains lie at 682 to 761 and 790 to 858; these read QVLV…PEPS and ILSV…AIAV.

This sequence belongs to the GlnD family. The cofactor is Mg(2+).

The enzyme catalyses [protein-PII]-L-tyrosine + UTP = [protein-PII]-uridylyl-L-tyrosine + diphosphate. It carries out the reaction [protein-PII]-uridylyl-L-tyrosine + H2O = [protein-PII]-L-tyrosine + UMP + H(+). Its activity is regulated as follows. Uridylyltransferase (UTase) activity is inhibited by glutamine, while glutamine activates uridylyl-removing (UR) activity. Its function is as follows. Modifies, by uridylylation and deuridylylation, the PII regulatory proteins (GlnB and homologs), in response to the nitrogen status of the cell that GlnD senses through the glutamine level. Under low glutamine levels, catalyzes the conversion of the PII proteins and UTP to PII-UMP and PPi, while under higher glutamine levels, GlnD hydrolyzes PII-UMP to PII and UMP (deuridylylation). Thus, controls uridylylation state and activity of the PII proteins, and plays an important role in the regulation of nitrogen assimilation and metabolism. The sequence is that of Bifunctional uridylyltransferase/uridylyl-removing enzyme from Burkholderia pseudomallei (strain 1106a).